Consider the following 372-residue polypeptide: tRNA-specific 2-thiouridylase MnmA (372 aa).

Residues 16-23 and Met42 each bind ATP; that span reads GMSGGVDS. Positions 102 to 104 are interaction with target base in tRNA; that stretch reads NPD. Cys107 functions as the Nucleophile in the catalytic mechanism. Cys107 and Cys205 are oxidised to a cystine. ATP is bound at residue Gly132. Residues 155-157 form an interaction with tRNA region; the sequence is KDQ. Residue Cys205 is the Cysteine persulfide intermediate of the active site. The segment at 317–318 is interaction with tRNA; the sequence is RY.

The protein belongs to the MnmA/TRMU family.

The protein localises to the cytoplasm. It catalyses the reaction S-sulfanyl-L-cysteinyl-[protein] + uridine(34) in tRNA + AH2 + ATP = 2-thiouridine(34) in tRNA + L-cysteinyl-[protein] + A + AMP + diphosphate + H(+). In terms of biological role, catalyzes the 2-thiolation of uridine at the wobble position (U34) of tRNA, leading to the formation of s(2)U34. This is tRNA-specific 2-thiouridylase MnmA from Shewanella baltica (strain OS223).